The primary structure comprises 127 residues: uncharacterized protein (127 aa).

The next 2 membrane-spanning stretches (helical) occupy residues 13–35 and 57–81; these read ILLL…GIIF and AVLI…IMIW.

The protein localises to the cell membrane. This is an uncharacterized protein from Mycoplasma genitalium (strain ATCC 33530 / DSM 19775 / NCTC 10195 / G37) (Mycoplasmoides genitalium).